Reading from the N-terminus, the 209-residue chain is MSWPATHDELEALGRELVAGGLGPFGGYEVAFGELSLTGPAHRIVEGLTLLRDDHGFQQLVDICGVDYPERERRFDVVYHLLSFTKNRRIRVKVQADEDTAVPSVTGVYPNADWYEREAFDMYGVFFDGHPDLRRILTDYGFHGHPLRKDFPMTGYVEVRYDDELKRVVYEPVKSVEWRNWDFLSPWEGVERGFAPILPGDEKGEEAKS.

This sequence belongs to the complex I 30 kDa subunit family. As to quaternary structure, NDH-1 is composed of 14 different subunits. Subunits NuoB, C, D, E, F, and G constitute the peripheral sector of the complex.

It localises to the cell inner membrane. The enzyme catalyses a quinone + NADH + 5 H(+)(in) = a quinol + NAD(+) + 4 H(+)(out). Functionally, NDH-1 shuttles electrons from NADH, via FMN and iron-sulfur (Fe-S) centers, to quinones in the respiratory chain. The immediate electron acceptor for the enzyme in this species is believed to be ubiquinone. Couples the redox reaction to proton translocation (for every two electrons transferred, four hydrogen ions are translocated across the cytoplasmic membrane), and thus conserves the redox energy in a proton gradient. The polypeptide is NADH-quinone oxidoreductase subunit C (Phenylobacterium zucineum (strain HLK1)).